Consider the following 546-residue polypeptide: Phosphomethylpyrimidine synthase (546 aa).

Residues asparagine 145, methionine 174, tyrosine 203, histidine 239, 259–261, 300–303, and glutamate 339 each bind substrate; these read SRG and DGLR. Histidine 343 lines the Zn(2+) pocket. Substrate is bound at residue tyrosine 366. Histidine 407 contributes to the Zn(2+) binding site. Residues cysteine 487, cysteine 490, and cysteine 495 each contribute to the [4Fe-4S] cluster site.

The protein belongs to the ThiC family. It depends on [4Fe-4S] cluster as a cofactor.

The catalysed reaction is 5-amino-1-(5-phospho-beta-D-ribosyl)imidazole + S-adenosyl-L-methionine = 4-amino-2-methyl-5-(phosphooxymethyl)pyrimidine + CO + 5'-deoxyadenosine + formate + L-methionine + 3 H(+). It functions in the pathway cofactor biosynthesis; thiamine diphosphate biosynthesis. In terms of biological role, catalyzes the synthesis of the hydroxymethylpyrimidine phosphate (HMP-P) moiety of thiamine from aminoimidazole ribotide (AIR) in a radical S-adenosyl-L-methionine (SAM)-dependent reaction. This is Phosphomethylpyrimidine synthase from Mycobacterium ulcerans (strain Agy99).